The following is a 301-amino-acid chain: NAD kinase (301 aa).

The Proton acceptor role is filled by aspartate 84. NAD(+) is bound by residues 84-85 (DG), arginine 89, 158-159 (NE), lysine 169, asparagine 188, 199-204 (TAYSFS), and glutamine 258.

This sequence belongs to the NAD kinase family. Requires a divalent metal cation as cofactor.

It localises to the cytoplasm. The enzyme catalyses NAD(+) + ATP = ADP + NADP(+) + H(+). In terms of biological role, involved in the regulation of the intracellular balance of NAD and NADP, and is a key enzyme in the biosynthesis of NADP. Catalyzes specifically the phosphorylation on 2'-hydroxyl of the adenosine moiety of NAD to yield NADP. In Tropheryma whipplei (strain Twist) (Whipple's bacillus), this protein is NAD kinase.